A 156-amino-acid chain; its full sequence is Small ribosomal subunit protein uS7 (156 aa).

This sequence belongs to the universal ribosomal protein uS7 family. Part of the 30S ribosomal subunit. Contacts proteins S9 and S11.

Its function is as follows. One of the primary rRNA binding proteins, it binds directly to 16S rRNA where it nucleates assembly of the head domain of the 30S subunit. Is located at the subunit interface close to the decoding center, probably blocks exit of the E-site tRNA. The chain is Small ribosomal subunit protein uS7 from Ruminiclostridium cellulolyticum (strain ATCC 35319 / DSM 5812 / JCM 6584 / H10) (Clostridium cellulolyticum).